Here is a 257-residue protein sequence, read N- to C-terminus: Inositol diphosphatase DSP2 (257 aa).

The 186-residue stretch at 66–251 (NFSMVDNGIF…VSGLKHTPMS (186 aa)) folds into the Tyrosine-protein phosphatase domain. Residues isoleucine 168 and lysine 172 each contribute to the 1D-myo-inositol hexakisphosphate site. Cysteine 192 functions as the Phosphocysteine intermediate in the catalytic mechanism.

It belongs to the protein-tyrosine phosphatase family. Atypical dual-specificity phosphatase Siw14-like subfamily. As to expression, expressed in roots, leaves, stems, flowers and siliques.

It carries out the reaction 5-diphospho-1D-myo-inositol 1,2,3,4,6-pentakisphosphate + H2O = 1D-myo-inositol hexakisphosphate + phosphate + H(+). The enzyme catalyses 1,5-bis(diphospho)-1D-myo-inositol 2,3,4,6-tetrakisphosphate + H2O = 1-diphospho-1D-myo-inositol 2,3,4,5,6-pentakisphosphate + phosphate + 2 H(+). The catalysed reaction is 3,5-bis(diphospho)-1D-myo-inositol 1,2,4,6-tetrakisphosphate + H2O = 3-diphospho-1D-myo-inositol 1,2,4,5,6-pentakisphosphate + phosphate + 2 H(+). It catalyses the reaction 6-diphospho-1D-myo-inositol pentakisphosphate + H2O = 1D-myo-inositol hexakisphosphate + phosphate + H(+). Cleaves the beta-phosphate at the 5-position of soluble inositol pyrophosphates. Has highest activity on 5-diphosphoinositol 1,2,3,4,6-pentakisphosphate (5-InsP(7)), 1,5-bis-diphosphoinositol 2,3,4,6-tetrakisphosphate (1,5-InsP(8)) and 3,5-InsP(8). Possesses phosphotyrosine phosphatase activity in vitro. Dephosphorylates the phosphoinositides PI(3,5)P2. Hydrolyzes para-nitrophenyl phosphate and O-methylfluorescein phosphate in vitro. The chain is Inositol diphosphatase DSP2 from Arabidopsis thaliana (Mouse-ear cress).